The sequence spans 559 residues: WD repeat-containing protein JIP5 (559 aa).

WD repeat units follow at residues 26 to 67 (QYSD…NYLQ), 77 to 116 (ADGK…WKTK), 117 to 156 (RHKG…VVKK), 162 to 201 (DNGG…ETNR), 207 to 247 (NGDD…ESDF), 265 to 306 (DQED…LEDQ), 313 to 347 (AKEE…DIKK), 354 to 394 (RNHS…SEEE), and 428 to 470 (DSDG…SDDE). Disordered regions lie at residues 386–500 (SRNE…LIGL) and 515–559 (EESE…FEGL). The segment covering 391-417 (SEEEDDEESESFSDSDSDSDSDSDSDS) has biased composition (acidic residues). Residues 418–428 (DSDRDRDRDSD) are compositionally biased toward basic and acidic residues. Acidic residues predominate over residues 482 to 494 (DMDDIDEGSDSSE). Residues 520 to 534 (EGEKLQKKRKNEPSK) show a composition bias toward basic and acidic residues. Residues 535-544 (KNTKNLKKVK) show a composition bias toward basic residues.

The protein belongs to the WD repeat WDR55 family.

Its subcellular location is the nucleus. The protein localises to the nucleolus. This is WD repeat-containing protein JIP5 (JIP5) from Vanderwaltozyma polyspora (strain ATCC 22028 / DSM 70294 / BCRC 21397 / CBS 2163 / NBRC 10782 / NRRL Y-8283 / UCD 57-17) (Kluyveromyces polysporus).